The sequence spans 166 residues: UPF0561 protein C2orf68 homolog (166 aa).

Basic and acidic residues predominate over residues 32 to 49; the sequence is NQLDRDDYDKKVKQAAKE. The disordered stretch occupies residues 32–107; sequence NQLDRDDYDK…SELEPPGRQL (76 aa). Low complexity predominate over residues 91-101; it reads ESSSSGSSELE.

It belongs to the UPF0561 family.

The protein is UPF0561 protein C2orf68 homolog of Mus musculus (Mouse).